We begin with the raw amino-acid sequence, 315 residues long: MVGPWVYLVAAVLLIGLILFLTRSRGRAAAADGEPLHNEEERAGAGQVGRSLPQESEEQRTGSRPRRRRDLGSRLQAQRRAQRVAWEDGDENVGQTVIPAQEEEGIEKPAEVHPTGKIGAKKLRKLEEKQARKAQREAEEAEREERKRLESQREAEWKKEEERLRLKEEQKEEEERKAQEEQARREHEEYLKLKEAFVVEEEGVSETMTEEQSHSFLTEFINYIKKSKVVLLEDLAFQMGLRTQDAINRIQDLLTEGTLTGVIDDRGKFIYITPEELAAVANFIRQRGRVSITELAQASNSLISWGQDLPAQASA.

A helical membrane pass occupies residues 1-28; it reads MVGPWVYLVAAVLLIGLILFLTRSRGRA. The mediates interaction with CDK5RAP3 stretch occupies residues 1-115; sequence MVGPWVYLVA…IEKPAEVHPT (115 aa). Topologically, residues 29–315 are cytoplasmic; the sequence is AAADGEPLHN…GQDLPAQASA (287 aa). Residues 30–184 form a disordered region; sequence AADGEPLHNE…ERKAQEEQAR (155 aa). A compositionally biased stretch (basic and acidic residues) spans 34-43; sequence EPLHNEEERA. Phosphoserine is present on serine 73. The tract at residues 119-217 is mediates interaction with TRIP4; it reads GAKKLRKLEE…MTEEQSHSFL (99 aa). Basic and acidic residues predominate over residues 125 to 184; that stretch reads KLEEKQARKAQREAEEAEREERKRLESQREAEWKKEEERLRLKEEQKEEEERKAQEEQAR. A UFM1-interacting motif (UFIM) motif is present at residues 196–210; sequence AFVVEEEGVSETMTE. Residues 217–315 form a mediates interaction with UFL1 region; sequence LTEFINYIKK…GQDLPAQASA (99 aa). The PCI domain occupies 230-274; the sequence is VLLEDLAFQMGLRTQDAINRIQDLLTEGTLTGVIDDRGKFIYITP. Lysine 268 is covalently cross-linked (Glycyl lysine isopeptide (Lys-Gly) (interchain with G-Cter in UFM1)).

It belongs to the DDRGK1 family. As to quaternary structure, component of the UFM1 ribosome E3 ligase (UREL) complex, composed of UFL1, DDRGK1 and CDK5RAP3. Interacts with (unphosphorylated) ERN1/IRE1-alpha; interaction is dependent on UFM1 and takes place in response to endoplasmic reticulum stress, regulating ERN1/IRE1-alpha stability. Interacts with NFKBIA. Interacts with SOX9. Ufmylated; conjugated to ubiquitin-like protein UFM1, probably at Lys-268 by UFL1. The relevance of ufmylation is however unclear: as DDRGK1 acts as a substrate adapter for ufmylation, it is uncertain whether ufmylation is a collateral effect of the ufmylation process or whether it is required to regulate its activity. Post-translationally, ubiquitinated. Ubiquitination probably triggers proteasomal degradation and is negatively regulated by UFL1, the enzyme involved in the ufmylation of DDRGK1. As to expression, ubiquitously expressed. Higher expression in pancreatic islets, pancreatic acini and testis (at protein level). Highly expressed in the intestinal exocrine cells.

It localises to the endoplasmic reticulum membrane. Its function is as follows. Component of the UFM1 ribosome E3 ligase (UREL) complex, a multiprotein complex that catalyzes ufmylation of endoplasmic reticulum-docked proteins. The UREL complex plays a key role in ribosome recycling by mediating mono-ufmylation of the RPL26/uL24 subunit of the 60S ribosome following ribosome dissociation: ufmylation weakens the junction between post-termination 60S subunits and SEC61 translocons, promoting release and recycling of the large ribosomal subunit from the endoplasmic reticulum membrane. Ufmylation of RPL26/uL24 and subsequent 60S ribosome recycling either take place after normal termination of translation or after ribosome stalling during cotranslational translocation at the endoplasmic reticulum. Within the UREL complex, DDRGK1 tethers the complex to the endoplasmic reticulum membrane to restrict its activity to endoplasmic reticulum-docked ribosomes and acts as an ufmylation 'reader': following RPL26/uL24 ufmylation, DDRGK1 specifically binds to ufmylated RPL26/uL24 via its UFIM motif, resulting in stable association between the 60S ribosome and the UREL complex, followed by dissociation of the 60S ribosome subunit from the endoplasmic reticulum membrane. The UREL complex is also involved in reticulophagy in response to endoplasmic reticulum stress by promoting ufmylation of proteins such as CYB5R3 and RPN1, thereby promoting lysosomal degradation of ufmylated proteins. Ufmylation-dependent reticulophagy inhibits the unfolded protein response (UPR) by regulating ERN1/IRE1-alpha stability. Acts as a regulator of immunity by promoting differentiation of B-cells into plasma cells: acts by promoting expansion of the endoplasmic reticulum and regulating the unfolded protein response (UPR). May also be required for TRIP4 ufmylation. May play a role in NF-kappa-B-mediated transcription through regulation of the phosphorylation and the degradation of NFKBIA, the inhibitor of NF-kappa-B. Plays a role in cartilage development through SOX9, inhibiting the ubiquitin-mediated proteasomal degradation of this transcriptional regulator. Required for stabilization and ufmylation of ATG9A. This Mus musculus (Mouse) protein is DDRGK domain-containing protein 1.